The following is a 295-amino-acid chain: Elongation factor Ts (295 aa).

The tract at residues 79-82 (TDFV) is involved in Mg(2+) ion dislocation from EF-Tu.

The protein belongs to the EF-Ts family.

It localises to the cytoplasm. In terms of biological role, associates with the EF-Tu.GDP complex and induces the exchange of GDP to GTP. It remains bound to the aminoacyl-tRNA.EF-Tu.GTP complex up to the GTP hydrolysis stage on the ribosome. In Bacillus anthracis (strain A0248), this protein is Elongation factor Ts.